Consider the following 144-residue polypeptide: Cytochrome c oxidase subunit 4 isoform 1, mitochondrial (144 aa).

Over 1 to 73 (SVVKSEDYTL…SFAEMNRGSN (73 aa)) the chain is Mitochondrial matrix. N6-acetyllysine; alternate is present on Lys4. Lys4 carries the post-translational modification N6-succinyllysine; alternate. 2 positions are modified to phosphoserine: Ser31 and Ser33. Lys35 bears the N6-acetyllysine; alternate mark. Lys35 carries the post-translational modification N6-succinyllysine; alternate. The residue at position 42 (Lys42) is an N6-acetyllysine. The chain crosses the membrane as a helical span at residues 74-99 (EWKTVVGAAMFFIGFTAILIMLEKRY). Topologically, residues 100–144 (VYGPLPHTFDKEWVAMQTKRMLDLKVNPVDGLASKWDYEKKEWKK) are mitochondrial intermembrane.

The protein belongs to the cytochrome c oxidase IV family. In terms of assembly, component of the cytochrome c oxidase (complex IV, CIV), a multisubunit enzyme composed of 14 subunits. The complex is composed of a catalytic core of 3 subunits MT-CO1, MT-CO2 and MT-CO3, encoded in the mitochondrial DNA, and 11 supernumerary subunits COX4I, COX5A, COX5B, COX6A, COX6B, COX6C, COX7A, COX7B, COX7C, COX8 and NDUFA4, which are encoded in the nuclear genome. The complex exists as a monomer or a dimer and forms supercomplexes (SCs) in the inner mitochondrial membrane with NADH-ubiquinone oxidoreductase (complex I, CI) and ubiquinol-cytochrome c oxidoreductase (cytochrome b-c1 complex, complex III, CIII), resulting in different assemblies (supercomplex SCI(1)III(2)IV(1) and megacomplex MCI(2)III(2)IV(2)). Interacts with PHB2; the interaction decreases in absence of SPHK2. Interacts with AFG1L. Interacts with ABCB7; this interaction allows the regulation of cellular iron homeostasis and cellular reactive oxygen species (ROS) levels in cardiomyocytes. Interacts with FLVCR2; this interaction occurs in the absence of heme and is disrupted upon heme binding. Interacts with IRGC.

Its subcellular location is the mitochondrion inner membrane. It functions in the pathway energy metabolism; oxidative phosphorylation. In terms of biological role, component of the cytochrome c oxidase, the last enzyme in the mitochondrial electron transport chain which drives oxidative phosphorylation. The respiratory chain contains 3 multisubunit complexes succinate dehydrogenase (complex II, CII), ubiquinol-cytochrome c oxidoreductase (cytochrome b-c1 complex, complex III, CIII) and cytochrome c oxidase (complex IV, CIV), that cooperate to transfer electrons derived from NADH and succinate to molecular oxygen, creating an electrochemical gradient over the inner membrane that drives transmembrane transport and the ATP synthase. Cytochrome c oxidase is the component of the respiratory chain that catalyzes the reduction of oxygen to water. Electrons originating from reduced cytochrome c in the intermembrane space (IMS) are transferred via the dinuclear copper A center (CU(A)) of subunit 2 and heme A of subunit 1 to the active site in subunit 1, a binuclear center (BNC) formed by heme A3 and copper B (CU(B)). The BNC reduces molecular oxygen to 2 water molecules using 4 electrons from cytochrome c in the IMS and 4 protons from the mitochondrial matrix. The sequence is that of Cytochrome c oxidase subunit 4 isoform 1, mitochondrial (COX4I1) from Pithecia pithecia (White-faced saki).